The sequence spans 270 residues: Orotidine 5'-phosphate decarboxylase (270 aa).

Substrate contacts are provided by residues Asp-39, 61–63, 93–102, Tyr-221, and Arg-239; these read KTH and DRKFADIGNT. Catalysis depends on Lys-95, which acts as the Proton donor.

Belongs to the OMP decarboxylase family.

It catalyses the reaction orotidine 5'-phosphate + H(+) = UMP + CO2. It participates in pyrimidine metabolism; UMP biosynthesis via de novo pathway; UMP from orotate: step 2/2. The polypeptide is Orotidine 5'-phosphate decarboxylase (URA3) (Candida albicans (strain SC5314 / ATCC MYA-2876) (Yeast)).